Consider the following 100-residue polypeptide: Large ribosomal subunit protein uL23 (100 aa).

It belongs to the universal ribosomal protein uL23 family. As to quaternary structure, part of the 50S ribosomal subunit. Contacts protein L29, and trigger factor when it is bound to the ribosome.

One of the early assembly proteins it binds 23S rRNA. One of the proteins that surrounds the polypeptide exit tunnel on the outside of the ribosome. Forms the main docking site for trigger factor binding to the ribosome. This is Large ribosomal subunit protein uL23 from Baumannia cicadellinicola subsp. Homalodisca coagulata.